Consider the following 180-residue polypeptide: Large ribosomal subunit protein uL22 (180 aa).

2 disordered regions span residues 1-20 (MTKP…CKSR) and 160-180 (PKPA…EISA). Residues 8–20 (KTPSNPEKSCKSR) are compositionally biased toward polar residues.

It belongs to the universal ribosomal protein uL22 family.

This chain is Large ribosomal subunit protein uL22 (rpl17), found in Dictyostelium discoideum (Social amoeba).